The following is a 660-amino-acid chain: GTP-binding protein BRASSINAZOLE INSENSITIVE PALE GREEN 2, chloroplastic (660 aa).

The N-terminal 53 residues, 1 to 53 (MVVLISSTVTICNVKPKLEDGNFRVSRLIHRPEVPFFSGLSNEKKKKCAVSVM), are a transit peptide targeting the chloroplast. Disordered stretches follow at residues 127–158 (EGDE…DDEM) and 191–212 (NDVE…TEEK). Positions 130–158 (EHVENDELAGFEMVDDDADEEEEGEDDEM) are enriched in acidic residues. Residues 273–457 (STRLIKPMSN…MYDTPGLLHP (185 aa)) form the CP-type G domain.

It belongs to the TRAFAC class YlqF/YawG GTPase family. In terms of assembly, binds to chloroplast 16S and 23S ribosomal RNAs. As to expression, mostly expressed in stems, petioles, leaves and flowers and, at low levels, also in roots.

It is found in the plastid. It localises to the chloroplast stroma. Functionally, required for brassinosteroid- (BR) mediated post-transcriptional and translational regulation in the chloroplast, including accumulation of chloroplast rRNA. Involved in chloroplast differentiation. The chain is GTP-binding protein BRASSINAZOLE INSENSITIVE PALE GREEN 2, chloroplastic from Arabidopsis thaliana (Mouse-ear cress).